A 228-amino-acid polypeptide reads, in one-letter code: Sodium channel regulatory subunit beta-4 (228 aa).

The N-terminal stretch at 1 to 30 (MPGARDQGAARARWLGIGLLGLFLLPVSLS) is a signal peptide. The region spanning 31-148 (LEVSVGKATT…NDFQHQATIF (118 aa)) is the Ig-like C2-type domain. Residues 31–162 (LEVSVGKATT…DKLEEVDNTV (132 aa)) lie on the Extracellular side of the membrane. Residues N45, N71, and N113 are each glycosylated (N-linked (GlcNAc...) asparagine). C53 and C131 are joined by a disulfide. The chain crosses the membrane as a helical span at residues 163 to 183 (TLIILGVVGGVIGLLIFILLV). The Cytoplasmic portion of the chain corresponds to 184-228 (KKFIAFIIKKTQEKKKECLVSSSGNDNTENGLPGSKAEEKAPTKV). Residues 198–228 (KKECLVSSSGNDNTENGLPGSKAEEKAPTKV) are disordered. Residues 203-213 (VSSSGNDNTEN) are compositionally biased toward polar residues. The span at 219–228 (KAEEKAPTKV) shows a compositional bias: basic and acidic residues.

It belongs to the sodium channel auxiliary subunit SCN4B (TC 8.A.17) family. In terms of assembly, a voltage-gated sodium (Nav) channel consists of an ion-conducting pore-forming alpha subunit functional on its own that is regulated by one or more beta subunits. The beta subunit SCN4B is disulfide-linked to the pore-forming alpha subunit. Interacts with SCN1A; regulatory subunit of SCN1A/Nav1.1. Interacts with SCN2A; regulatory subunit of SCN2A/Nav1.2. In terms of processing, contains an interchain disulfide bond with SCN2A.

It localises to the cell membrane. Its function is as follows. Regulatory subunit of multiple voltage-gated sodium (Nav) channels directly mediating the depolarization of excitable membranes. Navs, also called VGSCs (voltage-gated sodium channels) or VDSCs (voltage-dependent sodium channels), operate by switching between closed and open conformations depending on the voltage difference across the membrane. In the open conformation they allow Na(+) ions to selectively pass through the pore, along their electrochemical gradient. The influx of Na+ ions provokes membrane depolarization, initiating the propagation of electrical signals throughout cells and tissues. The accessory beta subunits participate in localization and functional modulation of the Nav channels. Modulates the activity of SCN1A/Nav1.1. Modulates the activity of SCN2A/Nav1.2. In Bos taurus (Bovine), this protein is Sodium channel regulatory subunit beta-4.